Reading from the N-terminus, the 592-residue chain is Hepatocyte nuclear factor 1-alpha-B (592 aa).

A dimerization region spans residues 1–31 (MASQLSYLQQELLRALLESGVTKEALKKALA). The region spanning 1–32 (MASQLSYLQQELLRALLESGVTKEALKKALAD) is the HNF-p1 domain. Positions 54–78 (NCVQLPNGLGEPQMSEDESSDDGGD) are disordered. The span at 67–77 (MSEDESSDDGG) shows a compositional bias: acidic residues. The POU-specific atypical domain maps to 85-180 (KELERLSPEE…IARQFTHAGH (96 aa)). 6 interaction with DNA regions span residues 128-130 (QRE), 141-147 (HLSQHLN), 153-156 (KTQK), 201-204 (RFKW), 261-263 (RVY), and 268-271 (NSGK). Residues 195-203 (KKMRRNRFK) carry the Nuclear localization signal motif. Positions 197–277 (MRRNRFKWGP…NSGKEEAFRH (81 aa)) form a DNA-binding region, homeobox; HNF1-type. 2 stretches are compositionally biased toward polar residues: residues 284–295 (YNGQQSSAQPLS) and 306–328 (RYTQ…TLSP). Disordered regions lie at residues 284–329 (YNGQ…LSPS) and 511–533 (KQVV…HNQD).

This sequence belongs to the HNF1 homeobox family. In terms of assembly, binds DNA as dimer. Forms a homodimer or heterodimer with HNF1-alpha-A. Potentially also form a heterodimer with HNF1-beta. Liver.

The protein localises to the nucleus. Functionally, transcriptional activator that regulates the tissue specific expression of multiple genes, especially in pancreas and liver. Binds to the hepatocyte specific promoter element HP1. Binds to the inverted palindrome 5'-GTTAATNATTAAC-3'. The sequence is that of Hepatocyte nuclear factor 1-alpha-B (hnf1a-b) from Xenopus laevis (African clawed frog).